A 240-amino-acid chain; its full sequence is DNA repair protein RecO (240 aa).

Belongs to the RecO family.

In terms of biological role, involved in DNA repair and RecF pathway recombination. This Xanthomonas oryzae pv. oryzae (strain MAFF 311018) protein is DNA repair protein RecO.